The sequence spans 434 residues: Indole diterpene prenyltransferase nodD2 (434 aa).

L-tryptophan contacts are provided by residues 85–86 (LI) and glutamate 94. Residues arginine 107, lysine 194, arginine 268, lysine 270, tyrosine 272, glutamine 351, tyrosine 353, tyrosine 418, and tyrosine 422 each coordinate substrate.

This sequence belongs to the tryptophan dimethylallyltransferase family.

The protein operates within secondary metabolite biosynthesis. In terms of biological role, indole diterpene prenyltransferase; part of the gene cluster that mediates the biosynthesis of the indole diterpenes nodulisporic acids (NA). Nodulisporic acid A (NAA) and its chemically modified derivatives are of particular significance because of their highly potent insecticidal activity against blood-feeding arthropods and lack of observable adverse effects on mammals, in particular the tremogenicity associated with the paspaline-derived IDTs is not observed. The geranylgeranyl diphosphate (GGPP) synthase ggs1, localized outside of the cluster, is proposed to catalyze the first step in nodulisporic acid biosynthesis via conversion of farnesyl pyrophosphate and isopentyl pyrophosphate into geranylgeranyl pyrophosphate (GGPP). Condensation of indole-3-glycerol phosphate with GGPP by the prenyl transferase nodC then forms 3-geranylgeranylindole (3-GGI). Epoxidation by the FAD-dependent monooxygenase nodM leads to a single-epoxidized-GGI that is substrate of the terpene cyclase nodB for cyclization to yield emindole SB. The terminal methyl carbon, C28, of emindole SB is then oxidized by the cytochrome P450 monooxygenase nodW to produce nodulisporic acid F (NAF), the pentacyclic core of NAA. NAF is converted to nodulisporic acid E (NAE) via prenylation. This step is probably performed by one of the indole diterpene prenyltransferases nodD1 or nodD2. Several oxidation steps performed by the FAD-linked oxidoreductase nodO and one of the cytochrome P450 monooxygenase nodR, nodX or nodZ further convert NAE to nodulisporic acid D (NAD). NAD is substrate of cytochrome P450 monooxygenase nodJ to produce the precursor of nodulisporic acid C (NAC), converted to NAC by one of the indole diterpene prenyltransferases nodD1 or nodD2. The FAD-dependent monooxygenase nodY2 then oxidizes NAC to nodulisporic acid B (NAB). Finally NAB is converted to NAA by one of the cytochrome P450 monooxygenases nodR, nodX or nodZ. The protein is Indole diterpene prenyltransferase nodD2 of Hypoxylon pulicicidum.